A 274-amino-acid polypeptide reads, in one-letter code: NH(3)-dependent NAD(+) synthetase (274 aa).

Gly46 to Ser53 serves as a coordination point for ATP. Residue Asp52 coordinates Mg(2+). Arg140 serves as a coordination point for deamido-NAD(+). Thr160 is an ATP binding site. Position 165 (Glu165) interacts with Mg(2+). Deamido-NAD(+)-binding residues include Lys173 and Asp180. Positions 189 and 211 each coordinate ATP. Deamido-NAD(+) is bound at residue His260 to Lys261.

It belongs to the NAD synthetase family. Homodimer.

It carries out the reaction deamido-NAD(+) + NH4(+) + ATP = AMP + diphosphate + NAD(+) + H(+). It participates in cofactor biosynthesis; NAD(+) biosynthesis; NAD(+) from deamido-NAD(+) (ammonia route): step 1/1. In terms of biological role, catalyzes the ATP-dependent amidation of deamido-NAD to form NAD. Uses ammonia as a nitrogen source. This chain is NH(3)-dependent NAD(+) synthetase, found in Streptococcus sanguinis (strain SK36).